The sequence spans 206 residues: MTTPSTAPTPAPRKAEVSRNTAETQITVKLNLDGTGKASLSTGIGFFDHMLDQIARHGLIDLDIQAKGDLHIDGHHTVEDVGITFGQAVAQAVGDKKGLRRYGHAYVPLDEALSRVVIDFSGRPGLEMHVPFKSGMIGTFDSQLAYEFFQGFANHAFVTLHIDNLRGDNAHHQAETVFKAFARALRMALEIDPRSAGVIPSTKGSL.

Positions 1–21 (MTTPSTAPTPAPRKAEVSRNT) are disordered.

The protein belongs to the imidazoleglycerol-phosphate dehydratase family.

Its subcellular location is the cytoplasm. It carries out the reaction D-erythro-1-(imidazol-4-yl)glycerol 3-phosphate = 3-(imidazol-4-yl)-2-oxopropyl phosphate + H2O. The protein operates within amino-acid biosynthesis; L-histidine biosynthesis; L-histidine from 5-phospho-alpha-D-ribose 1-diphosphate: step 6/9. This chain is Imidazoleglycerol-phosphate dehydratase, found in Polaromonas sp. (strain JS666 / ATCC BAA-500).